Here is a 174-residue protein sequence, read N- to C-terminus: MDNGIFIVVTIFIVNILYVTIYTVRLLLTMKGYRYLAALSSVFEMIIYVVALSLVLDNLNNIANVLAYAVGFGVGIIVGMKIEERIALGYITVNVITKEYNLDLPNQIRDLGYGVTSWLASGRDGERMMLEILTQRKNERKLYKHIIEIDNGAFIVSSEPKQIHGGFWVKQVRK.

The next 3 helical transmembrane spans lie at 4-24, 36-56, and 62-82; these read GIFIVVTIFIVNILYVTIYTV, LAALSSVFEMIIYVVALSLVL, and IANVLAYAVGFGVGIIVGMKI.

Belongs to the UPF0316 family.

It localises to the cell membrane. This Listeria monocytogenes serovar 1/2a (strain ATCC BAA-679 / EGD-e) protein is UPF0316 protein lmo1776.